The sequence spans 453 residues: Serine/threonine-protein phosphatase 2A regulatory subunit B'' subunit gamma (453 aa).

2 consecutive EF-hand domains span residues 273–308 (PSAL…TMTN) and 341–376 (KEPA…IQEL). Residues Asp286, Asp288, Asn290, Met292, and Glu297 each contribute to the Ca(2+) site.

As to quaternary structure, interacts with MCM3AP/GANP. Interacts with PPP5C, and the phosphatase 2A core enzyme composed of the PPP2CA catalytic subunit and the constant regulatory subunit PPP2R1A. Finds in a complex with ABCB1, TFPI2 and PPP2R3C; leading to the dephosphorylation of ABCB1. As to expression, ubiquitously expressed in brain and other tissues.

The protein localises to the nucleus. Its subcellular location is the cytoplasm. Functionally, may regulate MCM3AP phosphorylation through phosphatase recruitment. May act as a negative regulator of ABCB1 expression and function through the dephosphorylation of ABCB1 by TFPI2/PPP2R3C complex. May play a role in the activation-induced cell death of B-cells. The polypeptide is Serine/threonine-protein phosphatase 2A regulatory subunit B'' subunit gamma (PPP2R3C) (Homo sapiens (Human)).